We begin with the raw amino-acid sequence, 152 residues long: Large ribosomal subunit protein bL9 (152 aa).

This sequence belongs to the bacterial ribosomal protein bL9 family.

In terms of biological role, binds to the 23S rRNA. This chain is Large ribosomal subunit protein bL9, found in Acaryochloris marina (strain MBIC 11017).